Consider the following 443-residue polypeptide: Threonine/serine transporter TdcC (443 aa).

Transmembrane regions (helical) follow at residues 22–42, 44–64, 97–117, 140–160, 163–183, 207–227, 259–279, 319–339, 366–386, 389–409, and 423–443; these read TTWT…FFPI, AGFG…PIAF, GVVI…IYGV, VVAL…KDLM, VMSY…LSLI, ILVT…FSPI, ASML…FTLS, ASII…LGTL, ISMI…PNIL, IEAM…MYAI, and DNVF…YKLF.

It belongs to the amino acid/polyamine transporter 2 family. SdaC/TdcC subfamily.

Its subcellular location is the cell inner membrane. It catalyses the reaction L-threonine(in) + H(+)(in) = L-threonine(out) + H(+)(out). The catalysed reaction is L-serine(in) + H(+)(in) = L-serine(out) + H(+)(out). Functionally, involved in the import of threonine and serine into the cell, with the concomitant import of a proton (symport system). The polypeptide is Threonine/serine transporter TdcC (Salmonella arizonae (strain ATCC BAA-731 / CDC346-86 / RSK2980)).